The sequence spans 432 residues: Chorismate synthase aro-2 (432 aa).

Active-site residues include His17, His106, and Asp367. The interval 406–432 (LKQTINSGKDTVGNGVSENVQESDLAQ) is disordered. The span at 408-432 (QTINSGKDTVGNGVSENVQESDLAQ) shows a compositional bias: polar residues.

This sequence belongs to the chorismate synthase family. In terms of assembly, homotetramer.

The enzyme catalyses 5-O-(1-carboxyvinyl)-3-phosphoshikimate = chorismate + phosphate. The catalysed reaction is FMNH2 + NADP(+) = FMN + NADPH + 2 H(+). The protein operates within metabolic intermediate biosynthesis; chorismate biosynthesis; chorismate from D-erythrose 4-phosphate and phosphoenolpyruvate: step 7/7. Bifunctional chorismate synthase and flavin reductase that catalyzes the conversion of 5-enolpyruvylshikimate 3-phosphate (EPSP) to form chorismate, which is the last common intermediate in the synthesis of the three aromatic amino acids phenylalanine, tyrosine and tryptophan. Acts also as a flavin reductase (FR) able to generate reduced flavin mononucleotide in the presence of NADPH. The chain is Chorismate synthase aro-2 from Neurospora crassa (strain ATCC 24698 / 74-OR23-1A / CBS 708.71 / DSM 1257 / FGSC 987).